A 267-amino-acid polypeptide reads, in one-letter code: Glutamate 5-kinase (267 aa).

Lys15 lines the ATP pocket. The substrate site is built by Ser55, Asp142, and Asn158. Residues 178–179 (SD) and 220–226 (TGGMATK) contribute to the ATP site.

The protein belongs to the glutamate 5-kinase family.

The protein localises to the cytoplasm. The enzyme catalyses L-glutamate + ATP = L-glutamyl 5-phosphate + ADP. Its pathway is amino-acid biosynthesis; L-proline biosynthesis; L-glutamate 5-semialdehyde from L-glutamate: step 1/2. Functionally, catalyzes the transfer of a phosphate group to glutamate to form L-glutamate 5-phosphate. This Ligilactobacillus salivarius (strain UCC118) (Lactobacillus salivarius) protein is Glutamate 5-kinase.